Here is a 433-residue protein sequence, read N- to C-terminus: G-protein coupled receptor 22 (433 aa).

The Extracellular segment spans residues 1 to 45; the sequence is MCFSPILEINMQSESNITVRDDIDDINTNMYQPLSYPLSFQVSLT. Asparagine 16 carries an N-linked (GlcNAc...) asparagine glycan. Residues 46–66 traverse the membrane as a helical segment; the sequence is GFLMLEIVLGLGSNLTVLVLY. Residues 67–85 lie on the Cytoplasmic side of the membrane; it reads CMKSNLINSVSNIITMNLH. The helical transmembrane segment at 86–106 threads the bilayer; it reads VLDVIICVGCIPLTIVILLLS. The Extracellular segment spans residues 107-115; that stretch reads LESNTALIC. The chain crosses the membrane as a helical span at residues 116–136; the sequence is CFHEACVSFASVSTAINVFAI. Residues 137–156 lie on the Cytoplasmic side of the membrane; the sequence is TLDRYDISVKPANRILTMGR. Residues 157–177 form a helical membrane-spanning segment; it reads AVMLMISIWIFSFFSFLIPFI. Topologically, residues 178–208 are extracellular; sequence EVNFFSLQSGNTWENKTLLCVSTNEYYTELG. N-linked (GlcNAc...) asparagine glycosylation is present at asparagine 192. The chain crosses the membrane as a helical span at residues 209–229; the sequence is MYYHLLVQIPIFFFTVVVMLI. Residues 230-315 are Cytoplasmic-facing; sequence TYTKILQALN…ERQKRVFRMS (86 aa). The helical transmembrane segment at 316 to 336 threads the bilayer; it reads LLIISTFLLCWTPISVLNTTI. Residues 337-349 are Extracellular-facing; sequence LCLGPSDLLVKLR. A helical transmembrane segment spans residues 350-370; sequence LCFLVMAYGTTIFHPLLYAFT. Topologically, residues 371–433 are cytoplasmic; sequence RQKFQKVLKS…KCLVPQVVTD (63 aa).

Belongs to the G-protein coupled receptor 1 family. As to expression, high expression in adult and fetal heart tissue. Expressed in the brain, with enrichment in the accumbens, amygdala, cerebellum, cortex, and hippocampus regions.

It is found in the cell membrane. Functionally, orphan G-protein coupled receptor. Seems to act through a G(i)/G(o) mediated pathway. May be involved in ciliogenesis. This is G-protein coupled receptor 22 from Homo sapiens (Human).